The following is a 138-amino-acid chain: Ribulose bisphosphate carboxylase small subunit (138 aa).

The protein belongs to the RuBisCO small chain family. In terms of assembly, heterohexadecamer of 8 large and 8 small subunits.

It is found in the plastid. Its subcellular location is the chloroplast. Its function is as follows. RuBisCO catalyzes two reactions: the carboxylation of D-ribulose 1,5-bisphosphate, the primary event in carbon dioxide fixation, as well as the oxidative fragmentation of the pentose substrate in the photorespiration process. Both reactions occur simultaneously and in competition at the same active site. Although the small subunit is not catalytic it is essential for maximal activity. This is Ribulose bisphosphate carboxylase small subunit from Cyanidium caldarium (Red alga).